The chain runs to 651 residues: Acetyl-coenzyme A synthetase (651 aa).

Residues 190-193 (RGGK), Thr-312, and Asn-336 contribute to the CoA site. ATP contacts are provided by residues 388–390 (GEP), 412–417 (DTWWQT), Asp-501, and Arg-516. Ser-524 serves as a coordination point for CoA. Arg-527 contributes to the ATP binding site. 3 residues coordinate Mg(2+): Val-538, His-540, and Val-543. Arg-585 is a binding site for CoA. Lys-610 carries the post-translational modification N6-acetyllysine.

Belongs to the ATP-dependent AMP-binding enzyme family. The cofactor is Mg(2+). Post-translationally, acetylated. Deacetylation by the SIR2-homolog deacetylase activates the enzyme.

It carries out the reaction acetate + ATP + CoA = acetyl-CoA + AMP + diphosphate. In terms of biological role, catalyzes the conversion of acetate into acetyl-CoA (AcCoA), an essential intermediate at the junction of anabolic and catabolic pathways. AcsA undergoes a two-step reaction. In the first half reaction, AcsA combines acetate with ATP to form acetyl-adenylate (AcAMP) intermediate. In the second half reaction, it can then transfer the acetyl group from AcAMP to the sulfhydryl group of CoA, forming the product AcCoA. The polypeptide is Acetyl-coenzyme A synthetase (Mesorhizobium japonicum (strain LMG 29417 / CECT 9101 / MAFF 303099) (Mesorhizobium loti (strain MAFF 303099))).